The sequence spans 313 residues: Pyrimidine-specific ribonucleoside hydrolase RihB (313 aa).

The active-site Proton acceptor is D11. Ca(2+) contacts are provided by D11, D16, and V124. Positions 227 and 239 each coordinate substrate. D240 is a binding site for Ca(2+).

Belongs to the IUNH family. RihB subfamily. As to quaternary structure, homotetramer. Ca(2+) is required as a cofactor.

The catalysed reaction is a pyrimidine ribonucleoside + H2O = a pyrimidine nucleobase + D-ribose. Hydrolyzes cytidine or uridine to ribose and cytosine or uracil, respectively. Has a clear preference for cytidine over uridine. Strictly specific for ribonucleosides. The sequence is that of Pyrimidine-specific ribonucleoside hydrolase RihB from Escherichia coli (strain SE11).